A 149-amino-acid chain; its full sequence is MPRPPICRRVEFLPGVTYFKPAAVPLRELEEVVLAVEELEAIRLKDKEGLEQEDCAARMGVSRPTFVRILNSARDKVADALVNGKAIRVEGGYYHLVGPKVRCRRCGHEWEPEQGGKEACPRCGSEELAGRGPGRGRCHRHGRFGEGEH.

A disordered region spans residues 129-149; the sequence is AGRGPGRGRCHRHGRFGEGEH.

Belongs to the UPF0251 family.

The chain is UPF0251 protein Moth_1655 from Moorella thermoacetica (strain ATCC 39073 / JCM 9320).